The following is a 243-amino-acid chain: Type II restriction enzyme NlaIV (243 aa).

It carries out the reaction Endonucleolytic cleavage of DNA to give specific double-stranded fragments with terminal 5'-phosphates.. Its function is as follows. A P subtype restriction enzyme that recognizes the double-stranded sequence 5'-GGNNCC-3' and cleaves after N-3. In Neisseria lactamica, this protein is Type II restriction enzyme NlaIV (nlaIVR).